We begin with the raw amino-acid sequence, 314 residues long: Oxidoreductase NAD-binding domain-containing protein 1 (314 aa).

An N-terminal signal peptide occupies residues 1 to 18; sequence MALVAGSAAYQVLRGVTG. An FAD-binding FR-type domain is found at 63–166; sequence EIISPAKVCG…VGGEFCFDPQ (104 aa). An NAD(+)-binding site is contributed by 180 to 185; the sequence is GVGINP.

In Xenopus laevis (African clawed frog), this protein is Oxidoreductase NAD-binding domain-containing protein 1 (oxnad1).